We begin with the raw amino-acid sequence, 426 residues long: UDP-N-acetylglucosamine 1-carboxyvinyltransferase (426 aa).

24–25 (KN) contributes to the phosphoenolpyruvate binding site. R95 contacts UDP-N-acetyl-alpha-D-glucosamine. The Proton donor role is filled by C119. At C119 the chain carries 2-(S-cysteinyl)pyruvic acid O-phosphothioketal. UDP-N-acetyl-alpha-D-glucosamine-binding positions include 124–128 (RPVDQ), D308, and V330.

Belongs to the EPSP synthase family. MurA subfamily.

Its subcellular location is the cytoplasm. It carries out the reaction phosphoenolpyruvate + UDP-N-acetyl-alpha-D-glucosamine = UDP-N-acetyl-3-O-(1-carboxyvinyl)-alpha-D-glucosamine + phosphate. The protein operates within cell wall biogenesis; peptidoglycan biosynthesis. Its function is as follows. Cell wall formation. Adds enolpyruvyl to UDP-N-acetylglucosamine. The polypeptide is UDP-N-acetylglucosamine 1-carboxyvinyltransferase (Deinococcus radiodurans (strain ATCC 13939 / DSM 20539 / JCM 16871 / CCUG 27074 / LMG 4051 / NBRC 15346 / NCIMB 9279 / VKM B-1422 / R1)).